The sequence spans 202 residues: GTP cyclohydrolase-2 (202 aa).

Residue 48 to 52 (RLHSE) coordinates GTP. Zn(2+) contacts are provided by C53, C64, and C66. GTP-binding positions include Q69, 91 to 93 (EGR), and T113. Catalysis depends on D125, which acts as the Proton acceptor. R127 serves as the catalytic Nucleophile. Residues T148 and K153 each coordinate GTP.

The protein belongs to the GTP cyclohydrolase II family. It depends on Zn(2+) as a cofactor.

It catalyses the reaction GTP + 4 H2O = 2,5-diamino-6-hydroxy-4-(5-phosphoribosylamino)-pyrimidine + formate + 2 phosphate + 3 H(+). It functions in the pathway cofactor biosynthesis; riboflavin biosynthesis; 5-amino-6-(D-ribitylamino)uracil from GTP: step 1/4. Catalyzes the conversion of GTP to 2,5-diamino-6-ribosylamino-4(3H)-pyrimidinone 5'-phosphate (DARP), formate and pyrophosphate. This Colwellia psychrerythraea (strain 34H / ATCC BAA-681) (Vibrio psychroerythus) protein is GTP cyclohydrolase-2.